We begin with the raw amino-acid sequence, 371 residues long: Methylthioribose-1-phosphate isomerase (371 aa).

Residues 53–55 (RGA), arginine 90, and glutamine 203 contribute to the substrate site. The active-site Proton donor is aspartate 243. 253-254 (NK) contacts substrate.

It belongs to the eIF-2B alpha/beta/delta subunits family. MtnA subfamily.

The enzyme catalyses 5-(methylsulfanyl)-alpha-D-ribose 1-phosphate = 5-(methylsulfanyl)-D-ribulose 1-phosphate. It catalyses the reaction 5-deoxy-alpha-D-ribose 1-phosphate = 5-deoxy-D-ribulose 1-phosphate. It participates in amino-acid biosynthesis; L-methionine biosynthesis via salvage pathway; L-methionine from S-methyl-5-thio-alpha-D-ribose 1-phosphate: step 1/6. Its function is as follows. Catalyzes the interconversion of methylthioribose-1-phosphate (MTR-1-P) into methylthioribulose-1-phosphate (MTRu-1-P). Also catalyzes the interconversion of 5-deoxyribose 1-phosphate and 5-deoxyribulose 1-phosphate. Part of a bifunctional DHAP-shunt salvage pathway for SAM by-products. This Escherichia coli O45:K1 (strain S88 / ExPEC) protein is Methylthioribose-1-phosphate isomerase.